The following is a 410-amino-acid chain: Imidazolonepropionase (410 aa).

Fe(3+) is bound by residues His-71 and His-73. His-71 and His-73 together coordinate Zn(2+). The 4-imidazolone-5-propanoate site is built by Arg-80, Tyr-143, and His-175. Tyr-143 contacts N-formimidoyl-L-glutamate. Fe(3+) is bound at residue His-235. His-235 is a Zn(2+) binding site. 4-imidazolone-5-propanoate is bound at residue Glu-238. Asp-309 contacts Fe(3+). Zn(2+) is bound at residue Asp-309.

This sequence belongs to the metallo-dependent hydrolases superfamily. HutI family. Zn(2+) is required as a cofactor. The cofactor is Fe(3+).

Its subcellular location is the cytoplasm. The catalysed reaction is 4-imidazolone-5-propanoate + H2O = N-formimidoyl-L-glutamate. The protein operates within amino-acid degradation; L-histidine degradation into L-glutamate; N-formimidoyl-L-glutamate from L-histidine: step 3/3. Catalyzes the hydrolytic cleavage of the carbon-nitrogen bond in imidazolone-5-propanoate to yield N-formimidoyl-L-glutamate. It is the third step in the universal histidine degradation pathway. The chain is Imidazolonepropionase from Thermoplasma acidophilum (strain ATCC 25905 / DSM 1728 / JCM 9062 / NBRC 15155 / AMRC-C165).